The sequence spans 940 residues: Vacuolar protein sorting-associated protein 54 (940 aa).

Phosphothreonine is present on threonine 30. Residues 192 to 218 (QQLERDKPLENGAQGAPGPGTGGQTPT) are disordered. A coiled-coil region spans residues 299-325 (HAILAEMEQAADQVRQLRAALAELHSH).

It belongs to the VPS54 family.

The protein resides in the golgi apparatus. It is found in the trans-Golgi network. Functionally, may be involved in retrograde transport from early and late endosomes to late Golgi. Required during spermatogenesis for sperm individualization. This chain is Vacuolar protein sorting-associated protein 54 (scat), found in Drosophila melanogaster (Fruit fly).